A 300-amino-acid polypeptide reads, in one-letter code: MMRILLFLATNLAVVLVASITLRLLGVEPYLNANGLNMNSLLIFCFVIGMAGSLVSLFISKWMAKMSTKAKVIEQPGNATERWLLDTVGELARDAGIKMPEVAIFPAQQSNAFATGWNKNDALVAVSAGLLERMRPEEIRAVLAHEIGHVANGDMVTLALIQGVLNTFVMFFARIVAQLVDSFLRRDDEGGGLGFFGYMAVVIVAEIVFGLVASMVVAWFSRFREYRADAAGAKLAGSGAMINALARLKAETQMPDQMPDTLTAFAITTGQTRKLMERLFASHPPLDDRIRALKESAYRE.

The next 2 membrane-spanning stretches (helical) occupy residues 4-24 (ILLF…TLRL) and 40-60 (SLLI…LFIS). Histidine 145 lines the Zn(2+) pocket. The active site involves glutamate 146. Residue histidine 149 coordinates Zn(2+). A run of 2 helical transmembrane segments spans residues 153–173 (GDMV…MFFA) and 193–213 (LGFF…GLVA). Position 225 (glutamate 225) interacts with Zn(2+).

This sequence belongs to the peptidase M48B family. The cofactor is Zn(2+).

It localises to the cell inner membrane. The protein is Protease HtpX of Chromohalobacter salexigens (strain ATCC BAA-138 / DSM 3043 / CIP 106854 / NCIMB 13768 / 1H11).